The following is a 452-amino-acid chain: UPF0210 protein Hore_14430 (452 aa).

The protein belongs to the UPF0210 family. As to quaternary structure, homodimer.

The sequence is that of UPF0210 protein Hore_14430 from Halothermothrix orenii (strain H 168 / OCM 544 / DSM 9562).